Consider the following 249-residue polypeptide: Indole-3-glycerol phosphate synthase (249 aa).

This sequence belongs to the TrpC family.

It carries out the reaction 1-(2-carboxyphenylamino)-1-deoxy-D-ribulose 5-phosphate + H(+) = (1S,2R)-1-C-(indol-3-yl)glycerol 3-phosphate + CO2 + H2O. It participates in amino-acid biosynthesis; L-tryptophan biosynthesis; L-tryptophan from chorismate: step 4/5. The protein is Indole-3-glycerol phosphate synthase of Pyrobaculum neutrophilum (strain DSM 2338 / JCM 9278 / NBRC 100436 / V24Sta) (Thermoproteus neutrophilus).